Here is a 261-residue protein sequence, read N- to C-terminus: Putative hydro-lyase SH0274 (261 aa).

The protein belongs to the D-glutamate cyclase family.

This chain is Putative hydro-lyase SH0274, found in Staphylococcus haemolyticus (strain JCSC1435).